Here is a 213-residue protein sequence, read N- to C-terminus: Peptidyl-tRNA hydrolase (213 aa).

Tyr15 is a tRNA binding site. His20 serves as the catalytic Proton acceptor. TRNA contacts are provided by Tyr66, Asn68, and Asn114. A disordered region spans residues 186-213; sequence MHAKPPRPKPPRPVTAPGAPVPPTEPSA. Residues 196–213 are compositionally biased toward pro residues; the sequence is PRPVTAPGAPVPPTEPSA.

It belongs to the PTH family. Monomer.

The protein resides in the cytoplasm. It catalyses the reaction an N-acyl-L-alpha-aminoacyl-tRNA + H2O = an N-acyl-L-amino acid + a tRNA + H(+). Functionally, hydrolyzes ribosome-free peptidyl-tRNAs (with 1 or more amino acids incorporated), which drop off the ribosome during protein synthesis, or as a result of ribosome stalling. Catalyzes the release of premature peptidyl moieties from peptidyl-tRNA molecules trapped in stalled 50S ribosomal subunits, and thus maintains levels of free tRNAs and 50S ribosomes. The protein is Peptidyl-tRNA hydrolase of Leptothrix cholodnii (strain ATCC 51168 / LMG 8142 / SP-6) (Leptothrix discophora (strain SP-6)).